Reading from the N-terminus, the 443-residue chain is MSTTDSIVSSQAKQSSWRKSDTTWTLGLFGTAIGAGVLFFPIRAGFGGLIPILLMLVLAYPIAFYCHRALARLCLSGSNPSGNITETVEEHFGKTGGVVITFLYFFAICPLLWIYGVTITNTFMTFWENQLQMPALNRGFVALFLLLLMAFVIWFGKDLMVKVMSYLVWPFIASLVLISLSLIPYWNSAVIDQVDLSNIALTGHDGILVTVWLGISIMVFSFNFSPIVSSFVVSKREEYEKEFGREFTERKCSQIISRASMLMVAVVMFFAFSCLFTLSPQNMADAKAQNIPVLSYLANHFASLSGTKSTFATVLEYGASIIALVAIFKSFFGHYLGTLEGLNGLVMKFGYKGDKTKVSMGKLNTISMIFIMGSTWVVAYANPNILDLIEAMGAPIIASLLCLLPMYAIRKAPSLAKYRGRLDNVFVTLIGLLTILNIVYKLF.

Transmembrane regions (helical) follow at residues 22 to 42 (TTWTLGLFGTAIGAGVLFFPI), 44 to 64 (AGFGGLIPILLMLVLAYPIAF), 97 to 117 (GVVITFLYFFAICPLLWIYGV), 140 to 160 (FVALFLLLLMAFVIWFGKDLM), 163 to 183 (VMSYLVWPFIASLVLISLSLI), 207 to 227 (ILVTVWLGISIMVFSFNFSPI), 259 to 279 (ASMLMVAVVMFFAFSCLFTLS), 319 to 339 (ASIIALVAIFKSFFGHYLGTL), 366 to 386 (ISMIFIMGSTWVVAYANPNIL), 389 to 409 (IEAMGAPIIASLLCLLPMYAI), and 423 to 443 (DNVFVTLIGLLTILNIVYKLF).

The protein belongs to the amino acid/polyamine transporter 2 family. SdaC/TdcC subfamily.

Its subcellular location is the cell inner membrane. It catalyses the reaction L-threonine(in) + H(+)(in) = L-threonine(out) + H(+)(out). It carries out the reaction L-serine(in) + H(+)(in) = L-serine(out) + H(+)(out). Its function is as follows. Involved in the import of threonine and serine into the cell, with the concomitant import of a proton (symport system). The sequence is that of Threonine/serine transporter TdcC from Salmonella paratyphi B (strain ATCC BAA-1250 / SPB7).